The chain runs to 217 residues: ATP phosphoribosyltransferase (217 aa).

It belongs to the ATP phosphoribosyltransferase family. Short subfamily. In terms of assembly, heteromultimer composed of HisG and HisZ subunits.

The protein resides in the cytoplasm. The catalysed reaction is 1-(5-phospho-beta-D-ribosyl)-ATP + diphosphate = 5-phospho-alpha-D-ribose 1-diphosphate + ATP. It participates in amino-acid biosynthesis; L-histidine biosynthesis; L-histidine from 5-phospho-alpha-D-ribose 1-diphosphate: step 1/9. Its function is as follows. Catalyzes the condensation of ATP and 5-phosphoribose 1-diphosphate to form N'-(5'-phosphoribosyl)-ATP (PR-ATP). Has a crucial role in the pathway because the rate of histidine biosynthesis seems to be controlled primarily by regulation of HisG enzymatic activity. This chain is ATP phosphoribosyltransferase, found in Burkholderia multivorans (strain ATCC 17616 / 249).